We begin with the raw amino-acid sequence, 46 residues long: Protein PsbN (46 aa).

The chain crosses the membrane as a helical span at residues 7–27 (ALSVAIGVLAVLFGLTGFGVY).

The protein belongs to the PsbN family.

Its subcellular location is the cellular thylakoid membrane. Functionally, may play a role in photosystem I and II biogenesis. This is Protein PsbN from Synechococcus sp. (strain CC9605).